The following is a 1042-amino-acid chain: Carbamoyl phosphate synthase large chain (1042 aa).

The tract at residues 1–417 (MTEDSRTILL…SLLKALRSSE (417 aa)) is carboxyphosphate synthetic domain. ATP-binding residues include R127, R182, G188, G189, E221, I223, E228, G254, I255, H256, Q297, and E314. An ATP-grasp 1 domain is found at 131 to 343 (RQRMADLGQP…IARVTAKVAL (213 aa)). Residues Q297, E314, and N316 each coordinate Mg(2+). Residues Q297, E314, and N316 each contribute to the Mn(2+) site. The interval 418-558 (YDPSVDWATV…SQGSTGSDVR (141 aa)) is oligomerization domain. The interval 559 to 947 (ADRDAHSVVI…WKAQVAASNA (389 aa)) is carbamoyl phosphate synthetic domain. One can recognise an ATP-grasp 2 domain in the interval 689–880 (NRLLDERDIS…IAKLAAKVMA (192 aa)). Positions 725, 764, 766, 771, 796, 797, 798, 799, 839, and 851 each coordinate ATP. Residues Q839, E851, and N853 each coordinate Mg(2+). Residues Q839, E851, and N853 each coordinate Mn(2+). The MGS-like domain maps to 947–1042 (APVPGSTAVV…DRPVNDETWG (96 aa)). Residues 948 to 1042 (PVPGSTAVVD…DRPVNDETWG (95 aa)) form an allosteric domain region.

This sequence belongs to the CarB family. In terms of assembly, composed of two chains; the small (or glutamine) chain promotes the hydrolysis of glutamine to ammonia, which is used by the large (or ammonia) chain to synthesize carbamoyl phosphate. Tetramer of heterodimers (alpha,beta)4. The cofactor is Mg(2+). Mn(2+) serves as cofactor.

The catalysed reaction is hydrogencarbonate + L-glutamine + 2 ATP + H2O = carbamoyl phosphate + L-glutamate + 2 ADP + phosphate + 2 H(+). The enzyme catalyses hydrogencarbonate + NH4(+) + 2 ATP = carbamoyl phosphate + 2 ADP + phosphate + 2 H(+). It participates in amino-acid biosynthesis; L-arginine biosynthesis; carbamoyl phosphate from bicarbonate: step 1/1. Its pathway is pyrimidine metabolism; UMP biosynthesis via de novo pathway; (S)-dihydroorotate from bicarbonate: step 1/3. Its function is as follows. Large subunit of the glutamine-dependent carbamoyl phosphate synthetase (CPSase). CPSase catalyzes the formation of carbamoyl phosphate from the ammonia moiety of glutamine, carbonate, and phosphate donated by ATP, constituting the first step of 2 biosynthetic pathways, one leading to arginine and/or urea and the other to pyrimidine nucleotides. The large subunit (synthetase) binds the substrates ammonia (free or transferred from glutamine from the small subunit), hydrogencarbonate and ATP and carries out an ATP-coupled ligase reaction, activating hydrogencarbonate by forming carboxy phosphate which reacts with ammonia to form carbamoyl phosphate. The protein is Carbamoyl phosphate synthase large chain of Halobacterium salinarum (strain ATCC 700922 / JCM 11081 / NRC-1) (Halobacterium halobium).